A 132-amino-acid chain; its full sequence is Small ribosomal subunit protein uS11 (132 aa).

Belongs to the universal ribosomal protein uS11 family. Part of the 30S ribosomal subunit. Interacts with proteins S7 and S18. Binds to IF-3.

Located on the platform of the 30S subunit, it bridges several disparate RNA helices of the 16S rRNA. Forms part of the Shine-Dalgarno cleft in the 70S ribosome. The sequence is that of Small ribosomal subunit protein uS11 from Clostridium kluyveri (strain NBRC 12016).